We begin with the raw amino-acid sequence, 576 residues long: RING finger and SPRY domain-containing protein 1 (576 aa).

An N-terminal signal peptide occupies residues 1–16 (MIVFGWAVFLASRSLG). Position 50 is a phosphoserine (Ser-50). The segment at 50-99 (SGTDDSVDTQQQQAENSAVPTADTRSQPRDPVRPPRRGRGPHEPRRKKQN) is disordered. The span at 57 to 68 (DTQQQQAENSAV) shows a compositional bias: polar residues. Over residues 83-97 (PPRRGRGPHEPRRKK) the composition is skewed to basic residues. A B30.2/SPRY domain is found at 300 to 483 (LFLKEGRQLT…CEFNFGAKPF (184 aa)). N-linked (GlcNAc...) asparagine glycosylation occurs at Asn-314. Residues 527–562 (CSLCCDEVADTQLKPCGHSDLCMDCALQLETCPLCR) form an RING-type zinc finger.

It localises to the secreted. In Pongo abelii (Sumatran orangutan), this protein is RING finger and SPRY domain-containing protein 1 (RSPRY1).